The chain runs to 92 residues: Small ribosomal subunit protein uS19 (92 aa).

The protein belongs to the universal ribosomal protein uS19 family.

In terms of biological role, protein S19 forms a complex with S13 that binds strongly to the 16S ribosomal RNA. This Staphylococcus epidermidis (strain ATCC 35984 / DSM 28319 / BCRC 17069 / CCUG 31568 / BM 3577 / RP62A) protein is Small ribosomal subunit protein uS19.